We begin with the raw amino-acid sequence, 233 residues long: Large ribosomal subunit protein uL2 (233 aa).

The disordered stretch occupies residues 194–233 (HPHGGGNHQHVGRPSTVGRGTPPGRKVGRLSPKRRKKYGR). Positions 219-233 (KVGRLSPKRRKKYGR) are enriched in basic residues.

Belongs to the universal ribosomal protein uL2 family. Part of the 50S ribosomal subunit. Forms a bridge to the 30S subunit in the 70S ribosome.

Its function is as follows. One of the primary rRNA binding proteins. Required for association of the 30S and 50S subunits to form the 70S ribosome, for tRNA binding and peptide bond formation. It has been suggested to have peptidyltransferase activity; this is somewhat controversial. Makes several contacts with the 16S rRNA in the 70S ribosome. The sequence is that of Large ribosomal subunit protein uL2 from Picrophilus torridus (strain ATCC 700027 / DSM 9790 / JCM 10055 / NBRC 100828 / KAW 2/3).